The chain runs to 658 residues: Endoglin (658 aa).

An N-terminal signal peptide occupies residues 1 to 25; that stretch reads MDRGTLPLAVALLLASCSLSPTSLA. The OR1, N-terminal part stretch occupies residues 26-46; the sequence is ETVHCDLQPVGPERGEVTYTT. The tract at residues 26-337 is required for interaction with GDF2; sequence ETVHCDLQPV…SSCGGRLQTS (312 aa). Topologically, residues 26–586 are extracellular; the sequence is ETVHCDLQPV…PDLSGCTSKG (561 aa). 7 cysteine pairs are disulfide-bonded: C30-C207, C53-C182, C242-C330, C350-C382, C363-C442, C394-C412, and C493-C549. The interval 47–199 is OR2; sequence SQVSKGCVAQ…MGRTLEWRPR (153 aa). 4 N-linked (GlcNAc...) asparagine glycosylation sites follow: N88, N102, N121, and N134. The interval 200 to 330 is OR1, C-terminal part; that stretch reads TPALVRGCHL…SIVSLHASSC (131 aa). Residues 270–282 are essential for interaction with GDF2; that stretch reads QIWTTGEYSFKIF. The N-linked (GlcNAc...) asparagine glycan is linked to N307. In terms of domain architecture, ZP spans 363–533; it reads CADDAMTLVL…PEGDPRFSFL (171 aa). The short motif at 399-401 is the Cell attachment site element; that stretch reads RGD. Residues 587–611 traverse the membrane as a helical segment; it reads LVLPAVLGITFGAFLIGALLTAALW. Over 612–658 the chain is Cytoplasmic; that stretch reads YIYSHTRSPSKREPVVAVAAPASSESSSTNHSIGSTQSTPCSTSSMA. Residues 626–639 show a composition bias toward low complexity; that stretch reads VVAVAAPASSESSS. Residues 626-658 form a disordered region; it reads VVAVAAPASSESSSTNHSIGSTQSTPCSTSSMA. A compositionally biased stretch (polar residues) spans 640 to 658; that stretch reads TNHSIGSTQSTPCSTSSMA. A phosphoserine; by TGFBR1 mark is found at S646 and S649.

Homodimer; disulfide-linked. Forms a heteromeric complex with the signaling receptors for transforming growth factor-beta: TGFBR1 and/or TGFBR2. It is able to bind TGFB1 and TGFB2 with high affinity, but not TGFB3. Interacts with GDF2, forming a heterotetramer with a 2:2 stoichiometry. Interacts with ACVRL1. Can form a heteromeric complex with GDF2 and ACVRL1. Interacts with BMP10. Interacts with DYNLT4. Interacts with ARRB2. As to expression, detected on umbilical veil endothelial cells. Detected in placenta (at protein level). Detected on endothelial cells.

It is found in the cell membrane. Vascular endothelium glycoprotein that plays an important role in the regulation of angiogenesis. Required for normal structure and integrity of adult vasculature. Regulates the migration of vascular endothelial cells. Required for normal extraembryonic angiogenesis and for embryonic heart development. May regulate endothelial cell shape changes in response to blood flow, which drive vascular remodeling and establishment of normal vascular morphology during angiogenesis. May play a critical role in the binding of endothelial cells to integrins and/or other RGD receptors. Acts as a TGF-beta coreceptor and is involved in the TGF-beta/BMP signaling cascade that ultimately leads to the activation of SMAD transcription factors. Required for GDF2/BMP9 signaling through SMAD1 in endothelial cells and modulates TGFB1 signaling through SMAD3. The protein is Endoglin (ENG) of Homo sapiens (Human).